The following is a 250-amino-acid chain: Imidazole glycerol phosphate synthase subunit HisF (250 aa).

Active-site residues include Asp11 and Asp130.

It belongs to the HisA/HisF family. In terms of assembly, heterodimer of HisH and HisF.

The protein localises to the cytoplasm. It catalyses the reaction 5-[(5-phospho-1-deoxy-D-ribulos-1-ylimino)methylamino]-1-(5-phospho-beta-D-ribosyl)imidazole-4-carboxamide + L-glutamine = D-erythro-1-(imidazol-4-yl)glycerol 3-phosphate + 5-amino-1-(5-phospho-beta-D-ribosyl)imidazole-4-carboxamide + L-glutamate + H(+). It functions in the pathway amino-acid biosynthesis; L-histidine biosynthesis; L-histidine from 5-phospho-alpha-D-ribose 1-diphosphate: step 5/9. Functionally, IGPS catalyzes the conversion of PRFAR and glutamine to IGP, AICAR and glutamate. The HisF subunit catalyzes the cyclization activity that produces IGP and AICAR from PRFAR using the ammonia provided by the HisH subunit. The sequence is that of Imidazole glycerol phosphate synthase subunit HisF from Elusimicrobium minutum (strain Pei191).